Here is a 385-residue protein sequence, read N- to C-terminus: MDSFLQVQKSTIALLGFDLFSENREMWKRPYRAMNVFSIAAIFPFILAAVLHNWKNVLLLADAMVALLITILGLFKFSMILYLRRDFKRLIDKFRLLMSNEAEQGEEYAEILNAANKQDQRMCTLFRTCFLLAWALNSVLPLVRMGLSYWLAGHAEPELPFPCLFPWNIHIIRNYVLSFIWSAFASTGVVLPAVSLDTIFCSFTSNLCAFFKIAQYKVVRFKGGSLKESQATLNKVFALYQTSLDMCNDLNQCYQPIICAQFFISSLQLCMLGYLFSITFAQTEGVYYASFIATIIIQAYIYCYCGENLKTESASFEWAIYDSPWHESLGAGGASTSICRSLLISMMRAHRGFRITGYFFEANMEAFSSIVRTAMSYITMLRSFS.

Residues 1 to 33 lie on the Cytoplasmic side of the membrane; the sequence is MDSFLQVQKSTIALLGFDLFSENREMWKRPYRA. Residues 34–54 form a helical membrane-spanning segment; the sequence is MNVFSIAAIFPFILAAVLHNW. Topologically, residues 55–62 are extracellular; sequence KNVLLLAD. A helical membrane pass occupies residues 63–83; the sequence is AMVALLITILGLFKFSMILYL. At 84 to 129 the chain is on the cytoplasmic side; sequence RRDFKRLIDKFRLLMSNEAEQGEEYAEILNAANKQDQRMCTLFRTC. Residues 130 to 150 traverse the membrane as a helical segment; the sequence is FLLAWALNSVLPLVRMGLSYW. Residues 151–175 are Extracellular-facing; that stretch reads LAGHAEPELPFPCLFPWNIHIIRNY. The helical transmembrane segment at 176 to 196 threads the bilayer; that stretch reads VLSFIWSAFASTGVVLPAVSL. The Cytoplasmic segment spans residues 197-255; sequence DTIFCSFTSNLCAFFKIAQYKVVRFKGGSLKESQATLNKVFALYQTSLDMCNDLNQCYQ. The chain crosses the membrane as a helical span at residues 256-276; it reads PIICAQFFISSLQLCMLGYLF. Residues 277 to 284 are Extracellular-facing; the sequence is SITFAQTE. The chain crosses the membrane as a helical span at residues 285 to 305; the sequence is GVYYASFIATIIIQAYIYCYC. At 306–357 the chain is on the cytoplasmic side; the sequence is GENLKTESASFEWAIYDSPWHESLGAGGASTSICRSLLISMMRAHRGFRITG. The chain crosses the membrane as a helical span at residues 358–378; the sequence is YFFEANMEAFSSIVRTAMSYI. Over 379–385 the chain is Extracellular; the sequence is TMLRSFS.

Belongs to the insect chemoreceptor superfamily. Heteromeric odorant receptor channel (TC 1.A.69) family. Or1a subfamily. Interacts with Orco. Complexes exist early in the endomembrane system in olfactory sensory neurons (OSNs), coupling these complexes to the conserved ciliary trafficking pathway. In terms of tissue distribution, expressed with Orco in 40 olfactory receptor neurons in a broad area across the antenna, including both anterior and posterior faces. This expression pattern matches the distribution of the small sensilla basiconica. Expression in the antenna is observed late in antennal development at 93 hours APF.

The protein localises to the cell membrane. Its function is as follows. Odorant receptor which mediates acceptance or avoidance behavior, depending on its substrates. The odorant receptor repertoire encodes a large collection of odor stimuli that vary widely in identity, intensity, and duration. Complexes with Orco to form odorant-sensing units, providing sensitive and prolonged odorant signaling and calcium permeability. They are necessary and sufficient to promote functional reconstitution of odor-evoked signaling in sensory neurons that normally respond only to carbon dioxide. Involved in the behavioral responses to esters. Involved in the behavioral responses to pentyl acetate. This chain is Odorant receptor 47a (Or47a), found in Drosophila melanogaster (Fruit fly).